Here is a 288-residue protein sequence, read N- to C-terminus: Homoserine kinase (288 aa).

79–89 contributes to the ATP binding site; it reads PPARGLGSSSA.

It belongs to the GHMP kinase family. Homoserine kinase subfamily.

Its subcellular location is the cytoplasm. It catalyses the reaction L-homoserine + ATP = O-phospho-L-homoserine + ADP + H(+). It functions in the pathway amino-acid biosynthesis; L-threonine biosynthesis; L-threonine from L-aspartate: step 4/5. Its function is as follows. Catalyzes the ATP-dependent phosphorylation of L-homoserine to L-homoserine phosphate. This chain is Homoserine kinase, found in Listeria welshimeri serovar 6b (strain ATCC 35897 / DSM 20650 / CCUG 15529 / CIP 8149 / NCTC 11857 / SLCC 5334 / V8).